A 128-amino-acid chain; its full sequence is Lutropin subunit beta (128 aa).

Cystine bridges form between Cys-18-Cys-66, Cys-32-Cys-81, Cys-35-Cys-119, Cys-43-Cys-97, Cys-47-Cys-99, and Cys-102-Cys-109. A glycan (N-linked (GlcNAc...) asparagine) is linked at Asn-22.

It belongs to the glycoprotein hormones subunit beta family. In terms of assembly, heterodimer of a common alpha chain and a unique beta chain which confers biological specificity to thyrotropin, lutropin, follitropin and gonadotropin.

It is found in the secreted. Its function is as follows. Promotes spermatogenesis and ovulation by stimulating the testes and ovaries to synthesize steroids. The chain is Lutropin subunit beta (LHB) from Struthio camelus (Common ostrich).